The primary structure comprises 417 residues: Serine hydroxymethyltransferase 2 (417 aa).

(6S)-5,6,7,8-tetrahydrofolate-binding positions include Leu-121 and 125–127; that span reads GHL. At Lys-230 the chain carries N6-(pyridoxal phosphate)lysine. 355–357 lines the (6S)-5,6,7,8-tetrahydrofolate pocket; it reads SPF.

The protein belongs to the SHMT family. In terms of assembly, homodimer. It depends on pyridoxal 5'-phosphate as a cofactor.

It localises to the cytoplasm. It carries out the reaction (6R)-5,10-methylene-5,6,7,8-tetrahydrofolate + glycine + H2O = (6S)-5,6,7,8-tetrahydrofolate + L-serine. The protein operates within one-carbon metabolism; tetrahydrofolate interconversion. Its pathway is amino-acid biosynthesis; glycine biosynthesis; glycine from L-serine: step 1/1. Catalyzes the reversible interconversion of serine and glycine with tetrahydrofolate (THF) serving as the one-carbon carrier. This reaction serves as the major source of one-carbon groups required for the biosynthesis of purines, thymidylate, methionine, and other important biomolecules. Also exhibits THF-independent aldolase activity toward beta-hydroxyamino acids, producing glycine and aldehydes, via a retro-aldol mechanism. This chain is Serine hydroxymethyltransferase 2, found in Pseudomonas syringae pv. syringae (strain B728a).